Here is a 481-residue protein sequence, read N- to C-terminus: Protein nucleotidyltransferase YdiU (481 aa).

8 residues coordinate ATP: G87, G89, R90, K110, D122, G123, R173, and R180. D249 functions as the Proton acceptor in the catalytic mechanism. Mg(2+) is bound by residues N250 and D259. D259 is an ATP binding site.

It belongs to the SELO family. The cofactor is Mg(2+). Mn(2+) is required as a cofactor.

It catalyses the reaction L-seryl-[protein] + ATP = 3-O-(5'-adenylyl)-L-seryl-[protein] + diphosphate. It carries out the reaction L-threonyl-[protein] + ATP = 3-O-(5'-adenylyl)-L-threonyl-[protein] + diphosphate. The enzyme catalyses L-tyrosyl-[protein] + ATP = O-(5'-adenylyl)-L-tyrosyl-[protein] + diphosphate. The catalysed reaction is L-histidyl-[protein] + UTP = N(tele)-(5'-uridylyl)-L-histidyl-[protein] + diphosphate. It catalyses the reaction L-seryl-[protein] + UTP = O-(5'-uridylyl)-L-seryl-[protein] + diphosphate. It carries out the reaction L-tyrosyl-[protein] + UTP = O-(5'-uridylyl)-L-tyrosyl-[protein] + diphosphate. Functionally, nucleotidyltransferase involved in the post-translational modification of proteins. It can catalyze the addition of adenosine monophosphate (AMP) or uridine monophosphate (UMP) to a protein, resulting in modifications known as AMPylation and UMPylation. This Mycobacterium sp. (strain KMS) protein is Protein nucleotidyltransferase YdiU.